Here is a 422-residue protein sequence, read N- to C-terminus: Probable metallocarboxypeptidase A (422 aa).

Positions 1–17 are cleaved as a signal peptide; that stretch reads MRSVLSLALLAANVVTA. Residues 18–112 constitute a propeptide, activation peptide; it reads AVVAPFDYSG…FEAYSAGYAP (95 aa). The Peptidase M14 domain occupies 119-419; sequence SYHSYQDHLS…AGTVAMLKAV (301 aa). Zn(2+) is bound by residues His-179 and Glu-182. Residues 179–182, Arg-237, and 254–255 each bind substrate; these read HARE and NR. The cysteines at positions 248 and 271 are disulfide-linked. Zn(2+) is bound at residue His-309. 310–311 contributes to the substrate binding site; that stretch reads SY. The Proton donor/acceptor role is filled by Glu-385.

The protein belongs to the peptidase M14 family. Requires Zn(2+) as cofactor.

Its subcellular location is the secreted. Functionally, extracellular metalloprotease that contributes to pathogenicity. This chain is Probable metallocarboxypeptidase A (MCPA), found in Arthroderma benhamiae (strain ATCC MYA-4681 / CBS 112371) (Trichophyton mentagrophytes).